Here is a 423-residue protein sequence, read N- to C-terminus: N-acylneuraminate cytidylyltransferase B (423 aa).

Residues arginine 30, asparagine 40, arginine 88, serine 97, serine 99, and glutamine 120 each contribute to the substrate site. Arginine 178 is a catalytic residue.

It belongs to the CMP-NeuNAc synthase family. Homotetramer.

Its subcellular location is the cytoplasm. It catalyses the reaction an N-acylneuraminate + CTP = a CMP-N-acyl-beta-neuraminate + diphosphate. The protein operates within amino-sugar metabolism; N-acetylneuraminate metabolism. Its function is as follows. Catalyzes the activation of 2-keto-3-deoxy-D-glycero-D-galacto-nononic acid (KDN) to cytidine 5'-monophosphate 2-keto-3-deoxy-D-glycero-D-galacto-nononic acid (CMP-KDN), a substrate required for the addition of sialic acid. Also has weak activity towards N-acetylneuraminic acid (NeuNAc) and N-glycolylneuraminic acid (Neu5Gc). This is N-acylneuraminate cytidylyltransferase B from Danio rerio (Zebrafish).